The sequence spans 241 residues: Uracil-DNA glycosylase (241 aa).

D71 (proton acceptor) is an active-site residue.

Belongs to the uracil-DNA glycosylase (UDG) superfamily. UNG family.

The protein localises to the cytoplasm. It carries out the reaction Hydrolyzes single-stranded DNA or mismatched double-stranded DNA and polynucleotides, releasing free uracil.. Its function is as follows. Excises uracil residues from the DNA which can arise as a result of misincorporation of dUMP residues by DNA polymerase or due to deamination of cytosine. The chain is Uracil-DNA glycosylase from Xanthomonas campestris pv. campestris (strain 8004).